Reading from the N-terminus, the 264-residue chain is uncharacterized protein (264 aa).

The signal sequence occupies residues 1–23 (MQQWNLTISNILIGLFFCFSAQA).

This is an uncharacterized protein from Shewanella oneidensis (strain ATCC 700550 / JCM 31522 / CIP 106686 / LMG 19005 / NCIMB 14063 / MR-1).